We begin with the raw amino-acid sequence, 636 residues long: Threonine--tRNA ligase (636 aa).

Residues 1–61 enclose the TGS domain; it reads MLKITLKDGS…NENCEVEILS (61 aa). Positions 244–534 are catalytic; the sequence is EHRKLGKELD…LIEHYEGKFP (291 aa). The Zn(2+) site is built by cysteine 335, histidine 386, and histidine 511.

This sequence belongs to the class-II aminoacyl-tRNA synthetase family. As to quaternary structure, homodimer. It depends on Zn(2+) as a cofactor.

The protein resides in the cytoplasm. It carries out the reaction tRNA(Thr) + L-threonine + ATP = L-threonyl-tRNA(Thr) + AMP + diphosphate + H(+). Functionally, catalyzes the attachment of threonine to tRNA(Thr) in a two-step reaction: L-threonine is first activated by ATP to form Thr-AMP and then transferred to the acceptor end of tRNA(Thr). Also edits incorrectly charged L-seryl-tRNA(Thr). In Natranaerobius thermophilus (strain ATCC BAA-1301 / DSM 18059 / JW/NM-WN-LF), this protein is Threonine--tRNA ligase.